A 514-amino-acid chain; its full sequence is MQQLNPSEISEIIKGRIDKLDVTSQARNEGTVVSVSDGIVRIHGLADVMYGEMIEFPGGVYGMALNLEQDSVGAVVLGAYTSLAEGMSAKCTGRILEVPVGKELLGRVVDALGNPVDGKGPLGNTETDAVEKVAPGVIWRKSVDQPVQTGYKAVDAMIPVGRGQRELIIGDRQIGKTALAIDAIINQKNSGIFCVYVAIGQKQSTIANVVRKLEENGALANTIIVAASASESPALQFLAPYSGCTMGEFFRDRGEDALIVYDDLSKQAVAYRQISLLLRRPPGREAYPGDVFYLHSRLLERASRVSEEYVEKFTNGAVTGKTGSLTALPIIETQAGDVSAFVPTNVISITDGQIFLESAMFNSGIRPAVNAGVSVSRVGGAAQTKIIKKLSGGIRTALAQYRELAAFAQFASDLDEATRKQLEHGQRVTELMKQKQYAPMSIADMALSLYAAERGFLTDVEIAKVGSFEQALIAYFNRDHAELMAKINVKGDFNDDIDAGMKAGIEKFKATQTW.

Gly170–Thr177 serves as a coordination point for ATP.

The protein belongs to the ATPase alpha/beta chains family. F-type ATPases have 2 components, CF(1) - the catalytic core - and CF(0) - the membrane proton channel. CF(1) has five subunits: alpha(3), beta(3), gamma(1), delta(1), epsilon(1). CF(0) has three main subunits: a(1), b(2) and c(9-12). The alpha and beta chains form an alternating ring which encloses part of the gamma chain. CF(1) is attached to CF(0) by a central stalk formed by the gamma and epsilon chains, while a peripheral stalk is formed by the delta and b chains.

Its subcellular location is the cell inner membrane. The enzyme catalyses ATP + H2O + 4 H(+)(in) = ADP + phosphate + 5 H(+)(out). Produces ATP from ADP in the presence of a proton gradient across the membrane. The alpha chain is a regulatory subunit. This chain is ATP synthase subunit alpha, found in Pseudomonas fluorescens (strain SBW25).